The following is a 198-amino-acid chain: Riboflavin synthase (198 aa).

Lumazine-binding repeat units lie at residues 1 to 95 (MFSG…IGGH) and 96 to 188 (FVSG…VDTV). 2,4-dihydroxypteridine-binding positions include 4 to 6 (GII), 46 to 48 (CLT), 60 to 65 (DVTEET), 99 to 101 (GHV), Lys130, 139 to 141 (SLT), and 153 to 158 (SVIPET).

As to quaternary structure, homotrimer.

It catalyses the reaction 2 6,7-dimethyl-8-(1-D-ribityl)lumazine + H(+) = 5-amino-6-(D-ribitylamino)uracil + riboflavin. Its pathway is cofactor biosynthesis; riboflavin biosynthesis; riboflavin from 2-hydroxy-3-oxobutyl phosphate and 5-amino-6-(D-ribitylamino)uracil: step 2/2. Its function is as follows. Catalyzes the dismutation of two molecules of 6,7-dimethyl-8-ribityllumazine, resulting in the formation of riboflavin and 5-amino-6-(D-ribitylamino)uracil. The sequence is that of Riboflavin synthase (ribE) from Chlamydia muridarum (strain MoPn / Nigg).